Consider the following 141-residue polypeptide: Aspartate 1-decarboxylase (141 aa).

The active-site Schiff-base intermediate with substrate; via pyruvic acid is Ser25. Ser25 carries the pyruvic acid (Ser) modification. Residue Thr57 coordinates substrate. The active-site Proton donor is Tyr58. Position 73 to 75 (73 to 75 (GAA)) interacts with substrate.

Belongs to the PanD family. Heterooctamer of four alpha and four beta subunits. Pyruvate is required as a cofactor. Is synthesized initially as an inactive proenzyme, which is activated by self-cleavage at a specific serine bond to produce a beta-subunit with a hydroxyl group at its C-terminus and an alpha-subunit with a pyruvoyl group at its N-terminus.

Its subcellular location is the cytoplasm. It carries out the reaction L-aspartate + H(+) = beta-alanine + CO2. It functions in the pathway cofactor biosynthesis; (R)-pantothenate biosynthesis; beta-alanine from L-aspartate: step 1/1. In terms of biological role, catalyzes the pyruvoyl-dependent decarboxylation of aspartate to produce beta-alanine. This Salinispora arenicola (strain CNS-205) protein is Aspartate 1-decarboxylase.